The chain runs to 333 residues: Glycerol-3-phosphate dehydrogenase [NAD(P)+] (333 aa).

NADPH-binding residues include serine 10, tryptophan 11, histidine 31, arginine 32, and lysine 105. Positions 105, 136, and 138 each coordinate sn-glycerol 3-phosphate. Alanine 140 serves as a coordination point for NADPH. 5 residues coordinate sn-glycerol 3-phosphate: lysine 191, aspartate 244, serine 254, arginine 255, and asparagine 256. The Proton acceptor role is filled by lysine 191. Position 255 (arginine 255) interacts with NADPH. Positions 279 and 281 each coordinate NADPH.

The protein belongs to the NAD-dependent glycerol-3-phosphate dehydrogenase family.

It localises to the cytoplasm. It catalyses the reaction sn-glycerol 3-phosphate + NAD(+) = dihydroxyacetone phosphate + NADH + H(+). It carries out the reaction sn-glycerol 3-phosphate + NADP(+) = dihydroxyacetone phosphate + NADPH + H(+). The protein operates within membrane lipid metabolism; glycerophospholipid metabolism. Its function is as follows. Catalyzes the reduction of the glycolytic intermediate dihydroxyacetone phosphate (DHAP) to sn-glycerol 3-phosphate (G3P), the key precursor for phospholipid synthesis. The polypeptide is Glycerol-3-phosphate dehydrogenase [NAD(P)+] (Chlorobium limicola (strain DSM 245 / NBRC 103803 / 6330)).